We begin with the raw amino-acid sequence, 297 residues long: Bifunctional protein FolD 2 (297 aa).

NADP(+)-binding positions include 172–174, Thr199, and Val240; that span reads GRG.

This sequence belongs to the tetrahydrofolate dehydrogenase/cyclohydrolase family. As to quaternary structure, homodimer.

The enzyme catalyses (6R)-5,10-methylene-5,6,7,8-tetrahydrofolate + NADP(+) = (6R)-5,10-methenyltetrahydrofolate + NADPH. The catalysed reaction is (6R)-5,10-methenyltetrahydrofolate + H2O = (6R)-10-formyltetrahydrofolate + H(+). It functions in the pathway one-carbon metabolism; tetrahydrofolate interconversion. Its function is as follows. Catalyzes the oxidation of 5,10-methylenetetrahydrofolate to 5,10-methenyltetrahydrofolate and then the hydrolysis of 5,10-methenyltetrahydrofolate to 10-formyltetrahydrofolate. In Paenarthrobacter aurescens (strain TC1), this protein is Bifunctional protein FolD 2.